The primary structure comprises 576 residues: Acetylcholine receptor subunit alpha-like 2 (576 aa).

The first 21 residues, Met1–Arg21, serve as a signal peptide directing secretion. Topologically, residues His22–Thr261 are extracellular. The N-linked (GlcNAc...) asparagine glycan is linked to Asn65. Intrachain disulfides connect Cys169-Cys183 and Cys243-Cys244. Asn254 carries N-linked (GlcNAc...) asparagine glycosylation. 3 helical membrane passes run Leu262–Leu285, Ile293–Ser311, and Tyr327–Leu346. Over Asn347 to Arg526 the chain is Cytoplasmic. Residues Leu527–Gly545 form a helical membrane-spanning segment. N-linked (GlcNAc...) asparagine glycosylation occurs at Asn570.

The protein belongs to the ligand-gated ion channel (TC 1.A.9) family. Acetylcholine receptor (TC 1.A.9.1) subfamily. CNS in embryos.

The protein localises to the postsynaptic cell membrane. The protein resides in the cell membrane. In terms of biological role, after binding acetylcholine, the AChR responds by an extensive change in conformation that affects all subunits and leads to opening of an ion-conducting channel across the plasma membrane. The sequence is that of Acetylcholine receptor subunit alpha-like 2 (nAChRalpha2) from Drosophila melanogaster (Fruit fly).